A 531-amino-acid polypeptide reads, in one-letter code: Sterol 26-hydroxylase, mitochondrial (531 aa).

A mitochondrion-targeting transit peptide spans Met-1–Ala-33. Residue Lys-283 is modified to N6-acetyllysine. The interval Pro-384 to Pro-398 is sterol-binding. Cys-476 contributes to the heme binding site. Residues Lys-509 and Lys-520 each carry the N6-acetyllysine modification.

Belongs to the cytochrome P450 family. In terms of assembly, interacts with HSP70; this interaction is required for initial targeting to mitochondria. The cofactor is heme. As to expression, expressed in the neural retina and underlying retinal pigment epithelium (at protein level). Expressed in the gray and white matter of cerebellum (at protein level).

Its subcellular location is the mitochondrion inner membrane. It catalyses the reaction 5beta-cholestane-3alpha,7alpha,12alpha-triol + 6 reduced [adrenodoxin] + 3 O2 + 5 H(+) = (25R)-3alpha,7alpha,12alpha-trihydroxy-5beta-cholestan-26-oate + 6 oxidized [adrenodoxin] + 4 H2O. It carries out the reaction cholestanol + 2 reduced [adrenodoxin] + O2 + 2 H(+) = (25R)-26-hydroxycholestanol + 2 oxidized [adrenodoxin] + H2O. The catalysed reaction is (25R)-3beta-hydroxycholest-5-en-7-one-26-al + 2 reduced [adrenodoxin] + O2 + H(+) = (25R)-3beta-hydroxycholest-5-en-7-one-26-oate + 2 oxidized [adrenodoxin] + H2O. The enzyme catalyses (25R)-3beta,26-dihydroxycholest-5-en-7-one + 2 reduced [adrenodoxin] + O2 + 2 H(+) = (25R)-3beta-hydroxycholest-5-en-7-one-26-al + 2 oxidized [adrenodoxin] + 2 H2O. It catalyses the reaction 7-oxocholesterol + 2 reduced [adrenodoxin] + O2 + 2 H(+) = (25R)-3beta,26-dihydroxycholest-5-en-7-one + 2 oxidized [adrenodoxin] + H2O. It carries out the reaction calciol + 2 reduced [adrenodoxin] + O2 + 2 H(+) = calcidiol + 2 oxidized [adrenodoxin] + H2O. The catalysed reaction is (25R)-5beta-cholestane-3alpha,7alpha,12alpha,26-tetrol + 2 reduced [adrenodoxin] + O2 + 2 H(+) = (25R)-3alpha,7alpha,12alpha-trihydroxy-5beta-cholestan-26-al + 2 oxidized [adrenodoxin] + 2 H2O. The enzyme catalyses 2 reduced [adrenodoxin] + cholesterol + O2 + 2 H(+) = (25R)-cholest-5-ene-3beta,26-diol + 2 oxidized [adrenodoxin] + H2O. It catalyses the reaction (25R)-3beta,4beta-dihydroxycholest-5-en-26-al + 2 reduced [adrenodoxin] + O2 + H(+) = (25R)-3beta,4beta-dihydroxycholest-5-en-26-oate + 2 oxidized [adrenodoxin] + H2O. It carries out the reaction (25R)-4beta,26-dihydroxycholesterol + 2 reduced [adrenodoxin] + O2 + 2 H(+) = (25R)-3beta,4beta-dihydroxycholest-5-en-26-al + 2 oxidized [adrenodoxin] + 2 H2O. The catalysed reaction is 4beta-hydroxycholesterol + 2 reduced [adrenodoxin] + O2 + 2 H(+) = (25R)-4beta,26-dihydroxycholesterol + 2 oxidized [adrenodoxin] + H2O. The enzyme catalyses (25R)-3beta-hydroxy-5-cholesten-26-al + 2 reduced [adrenodoxin] + O2 + H(+) = (25R)-3beta-hydroxy-5-cholestenoate + 2 oxidized [adrenodoxin] + H2O. It catalyses the reaction (25R)-cholest-5-ene-3beta,26-diol + 2 reduced [adrenodoxin] + O2 + 2 H(+) = (25R)-3beta-hydroxy-5-cholesten-26-al + 2 oxidized [adrenodoxin] + 2 H2O. It carries out the reaction (25R)-3alpha,7alpha,12alpha-trihydroxy-5beta-cholestan-26-al + 2 reduced [adrenodoxin] + O2 + H(+) = (25R)-3alpha,7alpha,12alpha-trihydroxy-5beta-cholestan-26-oate + 2 oxidized [adrenodoxin] + H2O. The catalysed reaction is 5beta-cholestane-3alpha,7alpha,12alpha-triol + 2 reduced [adrenodoxin] + O2 + 2 H(+) = (25R)-5beta-cholestane-3alpha,7alpha,12alpha,26-tetrol + 2 oxidized [adrenodoxin] + H2O. It participates in hormone biosynthesis; cholecalciferol biosynthesis. The protein operates within steroid metabolism; cholesterol degradation. It functions in the pathway lipid metabolism; bile acid biosynthesis. Its function is as follows. Cytochrome P450 monooxygenase that catalyzes regio- and stereospecific hydroxylation of cholesterol and its derivatives. Hydroxylates (with R stereochemistry) the terminal methyl group of cholesterol side-chain in a three step reaction to yield at first a C26 alcohol, then a C26 aldehyde and finally a C26 acid. Regulates cholesterol homeostasis by catalyzing the conversion of excess cholesterol to bile acids via both the 'neutral' (classic) and the 'acid' (alternative) pathways. May also regulate cholesterol homeostasis via generation of active oxysterols, which act as ligands for NR1H2 and NR1H3 nuclear receptors, modulating the transcription of genes involved in lipid metabolism. Plays a role in cholestanol metabolism in the cerebellum. Similarly to cholesterol, hydroxylates cholestanol and may facilitate sterol diffusion through the blood-brain barrier to the systemic circulation for further degradation. Also hydroxylates retinal 7-ketocholesterol, a noxious oxysterol with pro-inflammatory and pro-apoptotic effects, and may play a role in its elimination from the retinal pigment epithelium. May play a redundant role in vitamin D biosynthesis. Catalyzes 25-hydroxylation of vitamin D3 that is required for its conversion to a functionally active form. This chain is Sterol 26-hydroxylase, mitochondrial, found in Homo sapiens (Human).